Reading from the N-terminus, the 116-residue chain is Cysteine proteinase inhibitor 1 (116 aa).

Positions 1 to 26 (MVPKPLSLLLFLLLALSAAVVGGRKL) are cleaved as a signal peptide. One can recognise a Cystatin domain in the interval 30 to 89 (GGWRPIESLNSAEVQDVAQFAVSEHNKQANDELQYQSVVRGYTQVVAGTNYRLVIAAKDG). Positions 73 to 77 (QVVAG) match the Secondary area of contact motif. N-linked (GlcNAc...) asparagine glycosylation is present at Asn109.

The protein belongs to the cystatin family. Phytocystatin subfamily. Post-translationally, glycosylated.

The protein resides in the secreted. Its function is as follows. Specific inhibitor of papain family cysteine proteinases. Inhibits papain, chymopapain, bromelain, ficin, human cathepsins B, H and L, actinidain and house dustmite endopeptidase 1, but does not inhibit human bleomycin hydrolase. Inhibits papain with an IC(50) of 2.47 nM. Does not inhibit cysteine proteinases belonging to other families including clostripain, streptopain and calpain. The protein is Cysteine proteinase inhibitor 1 of Actinidia deliciosa (Kiwi).